The following is a 509-amino-acid chain: ATP synthase subunit alpha (509 aa).

169–176 lines the ATP pocket; that stretch reads GDRKTGKT.

It belongs to the ATPase alpha/beta chains family. As to quaternary structure, F-type ATPases have 2 components, CF(1) - the catalytic core - and CF(0) - the membrane proton channel. CF(1) has five subunits: alpha(3), beta(3), gamma(1), delta(1), epsilon(1). CF(0) has three main subunits: a(1), b(2) and c(9-12). The alpha and beta chains form an alternating ring which encloses part of the gamma chain. CF(1) is attached to CF(0) by a central stalk formed by the gamma and epsilon chains, while a peripheral stalk is formed by the delta and b chains.

It is found in the cell membrane. It catalyses the reaction ATP + H2O + 4 H(+)(in) = ADP + phosphate + 5 H(+)(out). In terms of biological role, produces ATP from ADP in the presence of a proton gradient across the membrane. The alpha chain is a regulatory subunit. This is ATP synthase subunit alpha from Lacticaseibacillus casei (strain BL23) (Lactobacillus casei).